Reading from the N-terminus, the 600-residue chain is UvrABC system protein C (600 aa).

Residues 16 to 94 enclose the GIY-YIG domain; sequence EKPGCYQYFD…IKEYQPRYNV (79 aa). Residues 208–243 enclose the UVR domain; sequence HRLVRMYRDRMQAYSEELRFEEAQICKERIELLERY.

This sequence belongs to the UvrC family. As to quaternary structure, interacts with UvrB in an incision complex.

Its subcellular location is the cytoplasm. The UvrABC repair system catalyzes the recognition and processing of DNA lesions. UvrC both incises the 5' and 3' sides of the lesion. The N-terminal half is responsible for the 3' incision and the C-terminal half is responsible for the 5' incision. In Porphyromonas gingivalis (strain ATCC 33277 / DSM 20709 / CIP 103683 / JCM 12257 / NCTC 11834 / 2561), this protein is UvrABC system protein C.